Consider the following 126-residue polypeptide: Large ribosomal subunit protein uL14m (126 aa).

It belongs to the universal ribosomal protein uL14 family. In terms of assembly, component of the mitochondrial large ribosomal subunit (mt-LSU). Mature yeast 74S mitochondrial ribosomes consist of a small (37S) and a large (54S) subunit. The 37S small subunit contains a 15S ribosomal RNA (15S mt-rRNA) and at least 32 different proteins. The 54S large subunit contains a 21S rRNA (21S mt-rRNA) and at least 45 different proteins.

The protein resides in the mitochondrion. Component of the mitochondrial ribosome (mitoribosome), a dedicated translation machinery responsible for the synthesis of mitochondrial genome-encoded proteins, including at least some of the essential transmembrane subunits of the mitochondrial respiratory chain. The mitoribosomes are attached to the mitochondrial inner membrane and translation products are cotranslationally integrated into the membrane. The protein is Large ribosomal subunit protein uL14m (mrpl38) of Schizosaccharomyces pombe (strain 972 / ATCC 24843) (Fission yeast).